The sequence spans 81 residues: uncharacterized protein (81 aa).

This sequence to Synechocystis PCC 6803 ssr2439.

May have a regulatory function. This is an uncharacterized protein from Synechococcus elongatus (strain ATCC 33912 / PCC 7942 / FACHB-805) (Anacystis nidulans R2).